The primary structure comprises 55 residues: Probable Rubredoxin-2 (55 aa).

The region spanning 4–54 (MARYQCMCGWVYDEDKGEPSQNIPPGTKFEDLPDTFRCPQCGLGKNAFRKI) is the Rubredoxin-like domain. 4 residues coordinate Fe cation: cysteine 9, cysteine 11, cysteine 41, and cysteine 44.

Belongs to the rubredoxin family. Fe(3+) serves as cofactor.

In terms of biological role, rubredoxin is a small nonheme, iron protein lacking acid-labile sulfide. Its single Fe, chelated to 4 Cys, functions as an electron acceptor and may also stabilize the conformation of the molecule. This Methanocaldococcus jannaschii (strain ATCC 43067 / DSM 2661 / JAL-1 / JCM 10045 / NBRC 100440) (Methanococcus jannaschii) protein is Probable Rubredoxin-2.